The sequence spans 329 residues: MQFIDEAKIFIKGGNGGDGCVSFRREKFVPNGGPDGGNGGCGGDIIFIGDRHLNTLINFKFKQHFLAQNGRAGAGNNRTGKSGQNLVLKVPVGTQILSNNKEHVIFDLTKDGQEFIIIRGGKGGLGNTYFKSSINQKPRKNTVGEIGDSMWVWLHLKLLSDVGLVGLPNAGKSTFLSAITSAKPKIADYPFTTLTPNLGVVYINNNSFVVADIPGLIAGAHLGQGLGDKFLKHIERCRIIVHLLDITAENLLQNYYTIRDELSSYSLSLKDKTEILCFTKTDTQSNEVIMSKLLELQPVINRVIYPISSYTKYGIKKLLANILSELQKS.

One can recognise an Obg domain in the interval 1-159 (MQFIDEAKIF…MWVWLHLKLL (159 aa)). The OBG-type G domain maps to 160-327 (SDVGLVGLPN…LLANILSELQ (168 aa)). Residues 166–173 (GLPNAGKS), 191–195 (FTTLT), 212–215 (DIPG), 279–282 (TKTD), and 308–310 (SSY) contribute to the GTP site. Mg(2+)-binding residues include serine 173 and threonine 193.

It belongs to the TRAFAC class OBG-HflX-like GTPase superfamily. OBG GTPase family. As to quaternary structure, monomer. Requires Mg(2+) as cofactor.

It is found in the cytoplasm. Its function is as follows. An essential GTPase which binds GTP, GDP and possibly (p)ppGpp with moderate affinity, with high nucleotide exchange rates and a fairly low GTP hydrolysis rate. Plays a role in control of the cell cycle, stress response, ribosome biogenesis and in those bacteria that undergo differentiation, in morphogenesis control. The polypeptide is GTPase Obg (Orientia tsutsugamushi (strain Boryong) (Rickettsia tsutsugamushi)).